The following is a 305-amino-acid chain: Uracil-DNA glycosylase (305 aa).

Asp-148 (proton acceptor) is an active-site residue.

The protein belongs to the uracil-DNA glycosylase (UDG) superfamily. UNG family.

Its subcellular location is the host nucleus. The catalysed reaction is Hydrolyzes single-stranded DNA or mismatched double-stranded DNA and polynucleotides, releasing free uracil.. Excises uracil residues from the DNA which can arise as a result of misincorporation of dUMP residues by DNA polymerase or deamination of cytosines. Therefore may reduce deleterious uracil incorporation into the viral genome, particularly in terminally differentiated cells which lack DNA repair enzymes. The chain is Uracil-DNA glycosylase from Varicella-zoster virus (strain Dumas) (HHV-3).